We begin with the raw amino-acid sequence, 647 residues long: Glutamyl-tRNA(Gln) amidotransferase subunit B, mitochondrial (647 aa).

A mitochondrion-targeting transit peptide spans 1 to 16 (MARNLCRNVQTTPRPL). The segment at 39–77 (PRPRYFGSSTAKSAKKKSNNKAYSGSSMSAGDASAGPSR) is disordered. A compositionally biased stretch (low complexity) spans 58–76 (NKAYSGSSMSAGDASAGPS).

Belongs to the GatB/GatE family. GatB subfamily. As to quaternary structure, subunit of the heterotrimeric GatCAB amidotransferase (AdT) complex, composed of A, B and C subunits.

It localises to the mitochondrion. The catalysed reaction is L-glutamyl-tRNA(Gln) + L-glutamine + ATP + H2O = L-glutaminyl-tRNA(Gln) + L-glutamate + ADP + phosphate + H(+). In terms of biological role, allows the formation of correctly charged Gln-tRNA(Gln) through the transamidation of misacylated Glu-tRNA(Gln) in the mitochondria. The reaction takes place in the presence of glutamine and ATP through an activated gamma-phospho-Glu-tRNA(Gln). The sequence is that of Glutamyl-tRNA(Gln) amidotransferase subunit B, mitochondrial from Mycosarcoma maydis (Corn smut fungus).